The following is a 364-amino-acid chain: D-alanine--D-alanine ligase (364 aa).

The 207-residue stretch at 146–352 folds into the ATP-grasp domain; the sequence is KLCAADAGVE…FDELISRLLL (207 aa). 179–234 serves as a coordination point for ATP; the sequence is TERFAFPVFVKPANLGSSVGISKVHNAAELRPALDKACALDAKVLVEETITGREVE. Mg(2+)-binding residues include aspartate 305, glutamate 319, and asparagine 321.

The protein belongs to the D-alanine--D-alanine ligase family. The cofactor is Mg(2+). Mn(2+) serves as cofactor.

Its subcellular location is the cytoplasm. The enzyme catalyses 2 D-alanine + ATP = D-alanyl-D-alanine + ADP + phosphate + H(+). It participates in cell wall biogenesis; peptidoglycan biosynthesis. Cell wall formation. The protein is D-alanine--D-alanine ligase of Chlorobaculum parvum (strain DSM 263 / NCIMB 8327) (Chlorobium vibrioforme subsp. thiosulfatophilum).